Reading from the N-terminus, the 802-residue chain is MDSWFILVLLGSGLICVSANNATTVAPSVGITRLINSSTAEPVKEEAKTSNPTSSLTSLSVAPTFSPNITLGPTYLTTVNSSDSDNGTTRTASTNSIGITISPNGTWLPDNQFTDARTEPWEGNSSTAATTPETFPPSGNSDSKDRRDETPIIAVMVALSSLLVIVFIIIVLYMLRFKKYKQAGSHSNSFRLSNGRTEDVEPQSVPLLARSPSTNRKYPPLPVDKLEEEINRRMADDNKLFREEFNALPACPIQATCEAASKEENKEKNRYVNILPYDHSRVHLTPVEGVPDSDYINASFINGYQEKNKFIAAQGPKEETVNDFWRMIWEQNTATIVMVTNLKERKECKCAQYWPDQGCWTYGNIRVSVEDVTVLVDYTVRKFCIQQVGDMTNRKPQRLITQFHFTSWPDFGVPFTPIGMLKFLKKVKACNPQYAGAIVVHCSAGVGRTGTFVVIDAMLDMMHTERKVDVYGFVSRIRAQRCQMVQTDMQYVFIYQALLEHYLYGDTELEVTSLETHLQKIYNKIPGTSNNGLEEEFKKLTSIKIQNDKMRTGNLPANMKKNRVLQIIPYEFNRVIIPVKRGEENTDYVNASFIDGYRQKDSYIASQGPLLHTIEDFWRMIWEWKSCSIVMLTELEERGQEKCAQYWPSDGLVSYGDITVELKKEEECESYTVRDLLVTNTRENKSRQIRQFHFHGWPEVGIPSDGKGMISIIAAVQKQQQQSGNHPITVHCSAGAGRTGTFCALSTVLERVKAEGILDVFQTVKSLRLQRPHMVQTLEQYEFCYKVVQEYIDAFSDYANFK.

The first 19 residues, methionine 1–alanine 19, serve as a signal peptide directing secretion. Residues asparagine 20–proline 151 lie on the Extracellular side of the membrane. N-linked (GlcNAc...) asparagine glycans are attached at residues asparagine 21 and asparagine 36. The segment at threonine 39–leucine 59 is disordered. N-linked (GlcNAc...) asparagine glycosylation is found at asparagine 68, asparagine 80, asparagine 86, asparagine 104, and asparagine 124. Composition is skewed to polar residues over residues valine 79 to aspartate 115 and glycine 123 to serine 141. Positions valine 79–arginine 146 are disordered. The chain crosses the membrane as a helical span at residues isoleucine 152–methionine 174. Over leucine 175–lysine 802 the chain is Cytoplasmic. Phosphoserine is present on residues serine 211 and serine 213. Tyrosine-protein phosphatase domains are found at residues phenylalanine 241–histidine 501 and leucine 533–tyrosine 791. Substrate is bound by residues aspartate 410, cysteine 442–arginine 448, and glutamine 486. The Phosphocysteine intermediate role is filled by cysteine 442. Catalysis depends on cysteine 732, which acts as the Phosphocysteine intermediate. Phosphotyrosine is present on tyrosine 798.

It belongs to the protein-tyrosine phosphatase family. Receptor class 4 subfamily. Part of a complex comprised of PTPRA, BCAR1, BCAR3 (via SH2 domain), and SRC. Within the complex, interacts (when phosphorylated on Tyr-798) with BCAR3 (via SH2 domain). Interacts with GRB2. In terms of processing, integrin binding to extracellular matrix induces phosphorylation at Tyr-798 which induces PTPRA localization and recruitment of BCAR3, BCAR1 and CRK to focal adhesions.

It localises to the cell membrane. The protein localises to the cell junction. The protein resides in the focal adhesion. The catalysed reaction is O-phospho-L-tyrosyl-[protein] + H2O = L-tyrosyl-[protein] + phosphate. Tyrosine protein phosphatase which is involved in integrin-mediated focal adhesion formation. Following integrin engagement, specifically recruits BCAR3, BCAR1 and CRK to focal adhesions thereby promoting SRC-mediated phosphorylation of BRAC1 and the subsequent activation of PAK and small GTPase RAC1 and CDC42. In Homo sapiens (Human), this protein is Receptor-type tyrosine-protein phosphatase alpha (PTPRA).